The following is a 372-amino-acid chain: GTPase Obg (372 aa).

Residues 1–159 form the Obg domain; the sequence is MKFIDEARIE…RMLKLELKVL (159 aa). The interval 128–147 is disordered; the sequence is LHFKSSTNRAPRQKTDGKPG. Residues 160–334 enclose the OBG-type G domain; that stretch reads ADVGLLGMPN…LVYAIHDYLV (175 aa). GTP contacts are provided by residues 166–173, 191–195, 213–216, 284–287, and 315–317; these read GMPNAGKS, FTTLA, DIPG, NKLD, and SAL. Mg(2+) is bound by residues Ser173 and Thr193.

This sequence belongs to the TRAFAC class OBG-HflX-like GTPase superfamily. OBG GTPase family. As to quaternary structure, monomer. Mg(2+) is required as a cofactor.

Its subcellular location is the cytoplasm. In terms of biological role, an essential GTPase which binds GTP, GDP and possibly (p)ppGpp with moderate affinity, with high nucleotide exchange rates and a fairly low GTP hydrolysis rate. Plays a role in control of the cell cycle, stress response, ribosome biogenesis and in those bacteria that undergo differentiation, in morphogenesis control. In Burkholderia mallei (strain NCTC 10247), this protein is GTPase Obg.